A 210-amino-acid polypeptide reads, in one-letter code: Vacuolar protein sorting-associated protein 2 homolog 3 (210 aa).

The tract at residues 1-23 is disordered; it reads MNIFTKKPNPREVLRESKREMTQ. The span at 9 to 23 shows a compositional bias: basic and acidic residues; sequence NPREVLRESKREMTQ. Positions 28–84 form a coiled coil; it reads IEKEIGSLQSEEKKLVLEIKRTAKSGNEGATKILARQLIRLRQQIANLQGSRAQMRG. Residues 178-200 are disordered; it reads LSSAPKGKIGGKKAEDVGSSGID.

It belongs to the SNF7 family. In terms of assembly, component of the endosomal sorting required for transport complex III (ESCRT-III), composed at least of VPS2, VPS20, VPS24 and VPS32.

It localises to the endosome. Functionally, component of the ESCRT-III complex, which is required for multivesicular bodies (MVBs) formation and sorting of endosomal cargo proteins into MVBs. The ESCRT-III complex is probably involved in the concentration of MVB cargo. This Arabidopsis thaliana (Mouse-ear cress) protein is Vacuolar protein sorting-associated protein 2 homolog 3 (VPS2.3).